Consider the following 119-residue polypeptide: Protein Wnt-4 (119 aa).

S1 is lipidated: O-palmitoleoyl serine; by PORCN. Disulfide bonds link C69-C100 and C85-C95. N86 is a glycosylation site (N-linked (GlcNAc...) asparagine).

It belongs to the Wnt family. In terms of processing, palmitoleoylation is required for efficient binding to frizzled receptors. Depalmitoleoylation leads to Wnt signaling pathway inhibition.

It is found in the secreted. The protein resides in the extracellular space. It localises to the extracellular matrix. Functionally, ligand for members of the frizzled family of seven transmembrane receptors. Plays an important role in embryonic development. In Plestiodon skiltonianus (Western skink), this protein is Protein Wnt-4 (WNT-4).